Consider the following 428-residue polypeptide: Endoplasmic reticulum junction formation protein lunapark (428 aa).

G2 carries the N-myristoyl glycine lipid modification. The Cytoplasmic portion of the chain corresponds to 2 to 45 (GGLFSRWRTKPSTVEVLESIDKEIQALEEFREKNQRLQKLWVGR). Residues 16-41 (EVLESIDKEIQALEEFREKNQRLQKL) adopt a coiled-coil conformation. Residues 46 to 66 (LILYSSVLYLFTCLIVYLWYL) form a helical membrane-spanning segment. Residues 67–77 (PDEFTARLAMT) lie on the Lumenal side of the membrane. Residues 78-98 (LPFFAFPLIIWSIRTVIIFFF) traverse the membrane as a helical segment. Topologically, residues 99–428 (SKRTERNNEA…ELSGESLTAE (330 aa)) are cytoplasmic. Residues 102-128 (TERNNEALDDLKSQRKKILEEVMEKET) adopt a coiled-coil conformation. Residues S114, S153, S177, S182, and S194 each carry the phosphoserine modification. Residues 143 to 247 (SKKAKECEPP…HPPGPPLARP (105 aa)) are disordered. The segment covering 185–198 (QGPPPQVPVSPGPP) has biased composition (pro residues). Residues T211 and T213 each carry the phosphothreonine modification. A phosphoserine mark is found at S217 and S227. The C4-type; plays a role in ER morphology zinc-finger motif lies at 276–301 (CQQCFSHNGMALKEEFEYIAFRCAYC). Residues S321, S353, and S384 each carry the phosphoserine modification. The tract at residues 356 to 428 (HDVLDDNTEQ…ELSGESLTAE (73 aa)) is disordered. Acidic residues predominate over residues 386-401 (SEEPEEKQETENEEAS). The residue at position 414 (S414) is a Phosphoserine.

Belongs to the lunapark family. As to quaternary structure, homodimer; homodimerization requires the C4-type zinc finger motif and decreases during mitosis in a phosphorylation-dependent manner. In terms of processing, myristoylated; myristoylation is necessary for the endoplasmic reticulum (ER) three-way ER tubular junction formation, but is not required neither for membrane translocation, membrane topology formation, nor for the specific localization to ER membranes. Phosphorylated. Phosphorylation occurs at Ser-177, Ser-182, Ser-217, Ser-227, Ser-321 and Ser-384 during interphase. Phosphorylation occurs at Ser-114, Ser-153, Ser-194, Thr-211 and Ser-353 during mitosis; these phosphorylations reduce both its homodimerization and the ER three-way tubular junction formation. Post-translationally, subject to proteasomal degradation following phosphorylation during mitosis. As to expression, expressed in neural precursor cells, where it is detected at the growth-cone-like structure and branching sites of neurite-like processes.

It localises to the endoplasmic reticulum membrane. Its function is as follows. Endoplasmic reticulum (ER)-shaping membrane protein that plays a role in determining ER morphology. Involved in the stabilization of nascent three-way ER tubular junctions within the ER network. May also play a role as a curvature-stabilizing protein within the three-way ER tubular junction network. May be involved in limb development. Is involved in central nervous system development. This chain is Endoplasmic reticulum junction formation protein lunapark, found in Homo sapiens (Human).